We begin with the raw amino-acid sequence, 188 residues long: A-type ATP synthase subunit E (188 aa).

Belongs to the V-ATPase E subunit family. In terms of assembly, has multiple subunits with at least A(3), B(3), C, D, E, F, H, I and proteolipid K(x).

The protein localises to the cell membrane. Its function is as follows. Component of the A-type ATP synthase that produces ATP from ADP in the presence of a proton gradient across the membrane. The protein is A-type ATP synthase subunit E of Archaeoglobus fulgidus (strain ATCC 49558 / DSM 4304 / JCM 9628 / NBRC 100126 / VC-16).